The primary structure comprises 218 residues: Ropporin-1-like protein (218 aa).

The RIIa domain occupies 17–54 (PELPDILKQFTKAAIRTQPADVLQWSAGYFSALSRGDP).

It belongs to the ropporin family. In terms of assembly, component of the axonemal radial spoke complex 1 (RS1), at least composed of spoke head proteins RSPH1, RSPH3, RSPH9 and the cilia-specific component RSPH4A or sperm-specific component RSPH6A, spoke stalk proteins RSPH14, DNAJB13, DYDC1, ROPN1L and NME5, and the anchor protein IQUB. May interact with AKAP3. Interacts with FSCB; the interaction increases upon spermatozoa capacitation conditions. Interacts with CFAP61. Sumoylated, sumoylation decreases upon spermatozoa capacitation conditions. Testis-specific. Expression is restricted to germ cells.

It localises to the cell projection. The protein resides in the cilium. The protein localises to the flagellum. Functions as part of axonemal radial spoke complexes that play an important part in the motility of sperm and cilia. Important for male fertility. With ROPN1, involved in fibrous sheath integrity and sperm motility, plays a role in PKA-dependent signaling processes required for spermatozoa capacitation. This is Ropporin-1-like protein (Ropn1l) from Mus musculus (Mouse).